Here is a 1483-residue protein sequence, read N- to C-terminus: Chromosome partition protein MukB (1483 aa).

An ATP-binding site is contributed by 34 to 41 (GGNGAGKS). Coiled-coil stretches lie at residues 326–418 (LEAD…QYNQ), 444–480 (LETF…QAYQ), 509–601 (RHLA…MQRA), 780–804 (RAAC…FATL), 837–923 (EIRQ…AKLE), 977–1115 (EMLS…TAKA), and 1209–1265 (VEAI…LQNV). The flexible hinge stretch occupies residues 666 to 783 (PGGSEDQRLN…EVPLFGRAAC (118 aa)).

This sequence belongs to the SMC family. MukB subfamily. As to quaternary structure, homodimerization via its hinge domain. Binds to DNA via its C-terminal region. Interacts, and probably forms a ternary complex, with MukE and MukF via its C-terminal region. The complex formation is stimulated by calcium or magnesium. Interacts with tubulin-related protein FtsZ.

The protein localises to the cytoplasm. Its subcellular location is the nucleoid. Its function is as follows. Plays a central role in chromosome condensation, segregation and cell cycle progression. Functions as a homodimer, which is essential for chromosome partition. Involved in negative DNA supercoiling in vivo, and by this means organize and compact chromosomes. May achieve or facilitate chromosome segregation by condensation DNA from both sides of a centrally located replisome during cell division. In Shigella dysenteriae serotype 1 (strain Sd197), this protein is Chromosome partition protein MukB.